The chain runs to 532 residues: Spore coat protein SP85 (532 aa).

A signal peptide spans 1–19 (MRLLSVLLIGFLCLAGTYA). N-linked (GlcNAc...) asparagine glycosylation is present at Asn47. Residues 197–265 (TQSPTQPPTQ…PTQPPTQPPV (69 aa)) are disordered. The segment covering 201-263 (TQPPTQPPTY…YPPTQPPTQP (63 aa)) has biased composition (pro residues). In terms of domain architecture, Follistatin-like 1 spans 267–289 (DCSTLECPEGFHCEIVNNRRTCV). The interval 297-320 (THPPTQSPTYPPTQPPTQPPTYPP) is disordered. Follistatin-like domains lie at 335-359 (SCDNVRCPRGYHCECNHWENVARCV), 400-423 (TCDQVRCPRKHHCECNRKGQVFCV), and 430-452 (TCKQVGCPENHECVSRRGELHCV).

As to quaternary structure, binds to cotE. In terms of processing, O-glycosylated.

The protein resides in the spore wall. In terms of biological role, required for incorporation of cotE into the spore coat and for the formation of the outer layer. Has a cross-bridging function between cellulose and other coat proteins. This chain is Spore coat protein SP85 (pspB), found in Dictyostelium discoideum (Social amoeba).